Reading from the N-terminus, the 545-residue chain is Oligopeptide-binding protein OppA (545 aa).

An N-terminal signal peptide occupies residues 1 to 20 (MKKRWSIVTLMLIFTLVLSA). Residue Cys21 is the site of N-palmitoyl cysteine attachment. Cys21 is lipidated: S-diacylglycerol cysteine. Thr470 carries the post-translational modification Phosphothreonine.

This sequence belongs to the bacterial solute-binding protein 5 family. As to quaternary structure, the complex is composed of two ATP-binding proteins (OppD and OppF), two transmembrane proteins (OppB and OppC) and a solute-binding protein (OppA). OppA interacts with FloT in detergent-resistant membranes (DRM). Colocalizes rarely with FloT membrane assemblies.

The protein localises to the cell membrane. The protein resides in the membrane raft. Its function is as follows. Part of the ABC transporter complex OppABCDF involved in the uptake of oligopeptides. Plays an important nutritional role. Binds peptides containing up to five amino acids residues regardless of their sequence, with highest affinity for tetra- and pentapeptides. Binds to the sporulation-promoting peptide PhrE (Ser-Arg-Asn-Val-Thr). Required for sporulation and genetic competence. The chain is Oligopeptide-binding protein OppA from Bacillus subtilis (strain 168).